A 542-amino-acid polypeptide reads, in one-letter code: Ribulokinase 2 (542 aa).

It belongs to the ribulokinase family.

The enzyme catalyses D-ribulose + ATP = D-ribulose 5-phosphate + ADP + H(+). It catalyses the reaction L-ribulose + ATP = L-ribulose 5-phosphate + ADP + H(+). It participates in carbohydrate degradation; L-arabinose degradation via L-ribulose; D-xylulose 5-phosphate from L-arabinose (bacterial route): step 2/3. The chain is Ribulokinase 2 from Staphylococcus saprophyticus subsp. saprophyticus (strain ATCC 15305 / DSM 20229 / NCIMB 8711 / NCTC 7292 / S-41).